The primary structure comprises 557 residues: CTP synthase (557 aa).

Residues methionine 1–leucine 270 are amidoligase domain. Serine 13 serves as a coordination point for CTP. Serine 13 provides a ligand contact to UTP. ATP is bound by residues serine 14–isoleucine 19 and aspartate 71. Residues aspartate 71 and glutamate 144 each coordinate Mg(2+). Residues aspartate 151–glutamate 153, lysine 191–glutamine 196, and lysine 227 contribute to the CTP site. UTP contacts are provided by residues lysine 191–glutamine 196 and lysine 227. Residues threonine 295–alanine 547 form the Glutamine amidotransferase type-1 domain. Glycine 356 lines the L-glutamine pocket. The Nucleophile; for glutamine hydrolysis role is filled by cysteine 383. L-glutamine-binding positions include leucine 384–glutamine 387, glutamate 407, and arginine 473. Active-site residues include histidine 520 and glutamate 522.

This sequence belongs to the CTP synthase family. Homotetramer.

It carries out the reaction UTP + L-glutamine + ATP + H2O = CTP + L-glutamate + ADP + phosphate + 2 H(+). The enzyme catalyses L-glutamine + H2O = L-glutamate + NH4(+). It catalyses the reaction UTP + NH4(+) + ATP = CTP + ADP + phosphate + 2 H(+). Its pathway is pyrimidine metabolism; CTP biosynthesis via de novo pathway; CTP from UDP: step 2/2. Allosterically activated by GTP, when glutamine is the substrate; GTP has no effect on the reaction when ammonia is the substrate. The allosteric effector GTP functions by stabilizing the protein conformation that binds the tetrahedral intermediate(s) formed during glutamine hydrolysis. Inhibited by the product CTP, via allosteric rather than competitive inhibition. Catalyzes the ATP-dependent amination of UTP to CTP with either L-glutamine or ammonia as the source of nitrogen. Regulates intracellular CTP levels through interactions with the four ribonucleotide triphosphates. The protein is CTP synthase of Paraburkholderia phytofirmans (strain DSM 17436 / LMG 22146 / PsJN) (Burkholderia phytofirmans).